A 377-amino-acid chain; its full sequence is O-phospho-L-seryl-tRNA:Cys-tRNA synthase (377 aa).

Pyridoxal 5'-phosphate contacts are provided by residues 83-84 (AR), N188, and 211-213 (SGH). K214 carries the post-translational modification N6-(pyridoxal phosphate)lysine.

It belongs to the SepCysS family. Homodimer. Interacts with SepRS. Pyridoxal 5'-phosphate serves as cofactor.

The catalysed reaction is O-phospho-L-seryl-tRNA(Cys) + hydrogen sulfide + H(+) = L-cysteinyl-tRNA(Cys) + phosphate. Its function is as follows. Converts O-phospho-L-seryl-tRNA(Cys) (Sep-tRNA(Cys)) to L-cysteinyl-tRNA(Cys) (Cys-tRNA(Cys)). This chain is O-phospho-L-seryl-tRNA:Cys-tRNA synthase, found in Methanothermobacter thermautotrophicus (strain ATCC 29096 / DSM 1053 / JCM 10044 / NBRC 100330 / Delta H) (Methanobacterium thermoautotrophicum).